The sequence spans 339 residues: tRNA N6-adenosine threonylcarbamoyltransferase (339 aa).

Fe cation is bound by residues His-114 and His-118. Substrate contacts are provided by residues 137-141 (VVSGG), Asp-170, Gly-183, Asp-187, and Asn-277. Fe cation is bound at residue Asp-305.

The protein belongs to the KAE1 / TsaD family. Fe(2+) is required as a cofactor.

The protein localises to the cytoplasm. It catalyses the reaction L-threonylcarbamoyladenylate + adenosine(37) in tRNA = N(6)-L-threonylcarbamoyladenosine(37) in tRNA + AMP + H(+). In terms of biological role, required for the formation of a threonylcarbamoyl group on adenosine at position 37 (t(6)A37) in tRNAs that read codons beginning with adenine. Is involved in the transfer of the threonylcarbamoyl moiety of threonylcarbamoyl-AMP (TC-AMP) to the N6 group of A37, together with TsaE and TsaB. TsaD likely plays a direct catalytic role in this reaction. The polypeptide is tRNA N6-adenosine threonylcarbamoyltransferase (Clostridium perfringens (strain ATCC 13124 / DSM 756 / JCM 1290 / NCIMB 6125 / NCTC 8237 / Type A)).